Consider the following 294-residue polypeptide: MKQLTLVKTVKGVGIGLHKGEPIEITLEPLEANSGIVFFRSDLNASYKASPENVINTQMATVLGDDRGFISTIEHLMSAINAYGIDNVRIVLNANEAPVMDGSSISFCMMLDEAGVKELDAPKKIMVIKKPIEVRDGNKFVRLTPTKEPRINYTIKFDNAVIGEQSYNFEFSKKNYIENIARARTFGFLKDVQALRSMNLALGGSLENTIVVDENRILNPEGLRFKDEFVRHKILDAIGDLTLLGYRVFGDYTSYAGSHHLNHLLTKEVLKDKDAYEIVSLEKTTQKAYEKVFA.

Zn(2+) contacts are provided by histidine 75, histidine 232, and aspartate 236. Histidine 259 functions as the Proton donor in the catalytic mechanism.

Belongs to the LpxC family. Zn(2+) is required as a cofactor.

The catalysed reaction is a UDP-3-O-[(3R)-3-hydroxyacyl]-N-acetyl-alpha-D-glucosamine + H2O = a UDP-3-O-[(3R)-3-hydroxyacyl]-alpha-D-glucosamine + acetate. It functions in the pathway glycolipid biosynthesis; lipid IV(A) biosynthesis; lipid IV(A) from (3R)-3-hydroxytetradecanoyl-[acyl-carrier-protein] and UDP-N-acetyl-alpha-D-glucosamine: step 2/6. Its function is as follows. Catalyzes the hydrolysis of UDP-3-O-myristoyl-N-acetylglucosamine to form UDP-3-O-myristoylglucosamine and acetate, the committed step in lipid A biosynthesis. The chain is UDP-3-O-acyl-N-acetylglucosamine deacetylase from Campylobacter jejuni subsp. doylei (strain ATCC BAA-1458 / RM4099 / 269.97).